A 157-amino-acid polypeptide reads, in one-letter code: Small ribosomal subunit protein uS7 (157 aa).

Belongs to the universal ribosomal protein uS7 family. Part of the 30S ribosomal subunit. Contacts proteins S9 and S11.

Functionally, one of the primary rRNA binding proteins, it binds directly to 16S rRNA where it nucleates assembly of the head domain of the 30S subunit. Is located at the subunit interface close to the decoding center, probably blocks exit of the E-site tRNA. This is Small ribosomal subunit protein uS7 from Polaromonas naphthalenivorans (strain CJ2).